The chain runs to 127 residues: Large ribosomal subunit protein bL20 (127 aa).

This sequence belongs to the bacterial ribosomal protein bL20 family.

In terms of biological role, binds directly to 23S ribosomal RNA and is necessary for the in vitro assembly process of the 50S ribosomal subunit. It is not involved in the protein synthesizing functions of that subunit. This is Large ribosomal subunit protein bL20 from Corynebacterium jeikeium (strain K411).